We begin with the raw amino-acid sequence, 336 residues long: UPF0324 membrane protein BR0028/BS1330_I0028 (336 aa).

11 consecutive transmembrane segments (helical) span residues 9–26 (ILPG…AMVL), 36–55 (RAWL…VRSL), 68–90 (FSAK…ASAV), 94–116 (GSGL…YGIG), 128–150 (LVAC…VIGA), 160–182 (AFTA…LLGL), 189–211 (ILAG…VSLL), 221–240 (LVRV…ISGN), 247–269 (PGFF…LHSL), 279–301 (AIQY…GVDI), and 313–335 (LTAI…MLGV).

It belongs to the UPF0324 family.

Its subcellular location is the cell membrane. The sequence is that of UPF0324 membrane protein BR0028/BS1330_I0028 from Brucella suis biovar 1 (strain 1330).